Reading from the N-terminus, the 255-residue chain is Hydroxyacylglutathione hydrolase (255 aa).

Residues His-56, His-58, Asp-60, His-61, His-114, Asp-133, and His-171 each contribute to the Zn(2+) site.

The protein belongs to the metallo-beta-lactamase superfamily. Glyoxalase II family. In terms of assembly, monomer. Zn(2+) serves as cofactor.

The enzyme catalyses an S-(2-hydroxyacyl)glutathione + H2O = a 2-hydroxy carboxylate + glutathione + H(+). The protein operates within secondary metabolite metabolism; methylglyoxal degradation; (R)-lactate from methylglyoxal: step 2/2. Thiolesterase that catalyzes the hydrolysis of S-D-lactoyl-glutathione to form glutathione and D-lactic acid. The sequence is that of Hydroxyacylglutathione hydrolase from Ruegeria pomeroyi (strain ATCC 700808 / DSM 15171 / DSS-3) (Silicibacter pomeroyi).